A 572-amino-acid polypeptide reads, in one-letter code: Protein 5NUC (572 aa).

A signal peptide spans methionine 1–alanine 25. Positions 39 and 41 each coordinate Zn(2+). A disulfide bridge connects residues cysteine 54 and cysteine 64. N-linked (GlcNAc...) asparagine glycosylation occurs at asparagine 82. The Zn(2+) site is built by aspartate 93, asparagine 125, histidine 227, and histidine 250. A disulfide bridge connects residues cysteine 360 and cysteine 365. 4 residues coordinate substrate: arginine 361, glutamine 399, arginine 404, and phenylalanine 427. Asparagine 454 and asparagine 490 each carry an N-linked (GlcNAc...) asparagine glycan. Cysteine 488 and cysteine 491 are oxidised to a cystine. Phenylalanine 512–aspartate 518 is a binding site for substrate.

Belongs to the 5'-nucleotidase family. It depends on Zn(2+) as a cofactor.

The catalysed reaction is UDP-sugar + H2O = UMP + alpha-D-aldose 1-phosphate.. The enzyme catalyses a ribonucleoside 5'-phosphate + H2O = a ribonucleoside + phosphate. In terms of biological role, degradation of external UDP-glucose to uridine monophosphate and glucose-1-phosphate, which can then be used by the cell. This is Protein 5NUC (5NUC) from Lutzomyia longipalpis (Sand fly).